We begin with the raw amino-acid sequence, 80 residues long: Putative defensin-like protein 23 (80 aa).

Positions 1–25 (MTTTMKIMSFAMLLVLLFSIDVVEG) are cleaved as a signal peptide. Disulfide bonds link cysteine 31-cysteine 80, cysteine 41-cysteine 66, cysteine 50-cysteine 76, and cysteine 54-cysteine 78.

This sequence belongs to the DEFL family.

Its subcellular location is the secreted. This chain is Putative defensin-like protein 23, found in Arabidopsis thaliana (Mouse-ear cress).